The chain runs to 270 residues: Glutamate racemase (270 aa).

Substrate-binding positions include 14-15 (DS) and 46-47 (YG). The Proton donor/acceptor role is filled by Cys-77. A substrate-binding site is contributed by 78 to 79 (NT). Cys-189 acts as the Proton donor/acceptor in catalysis. Residue 190 to 191 (TH) participates in substrate binding.

The protein belongs to the aspartate/glutamate racemases family.

The catalysed reaction is L-glutamate = D-glutamate. It participates in cell wall biogenesis; peptidoglycan biosynthesis. Provides the (R)-glutamate required for cell wall biosynthesis. This chain is Glutamate racemase, found in Neisseria meningitidis serogroup C.